We begin with the raw amino-acid sequence, 205 residues long: Protein TK0174 (205 aa).

Residues 7 to 201 form the AMMECR1 domain; that stretch reads EWGEFLVRLA…EEYPRGPVRR (195 aa).

This is Protein TK0174 from Thermococcus kodakarensis (strain ATCC BAA-918 / JCM 12380 / KOD1) (Pyrococcus kodakaraensis (strain KOD1)).